We begin with the raw amino-acid sequence, 420 residues long: Putative phosphate permease HI_1604 (420 aa).

12 helical membrane-spanning segments follow: residues Gly8–Ala28, Ala49–Thr69, Ile88–Thr108, Trp112–Ile132, Ile145–Ala165, Gly185–Leu205, Glu216–Phe236, Phe250–Phe270, Gly300–Ile320, Phe343–Ile363, Val370–Ile390, and Ile393–Tyr413.

This sequence belongs to the inorganic phosphate transporter (PiT) (TC 2.A.20) family.

It localises to the cell inner membrane. Its function is as follows. Potential transporter for phosphate. The chain is Putative phosphate permease HI_1604 from Haemophilus influenzae (strain ATCC 51907 / DSM 11121 / KW20 / Rd).